Reading from the N-terminus, the 351-residue chain is Holliday junction branch migration complex subunit RuvB (351 aa).

Positions 4–199 (DNPQFNQWYE…FGIINSLQYY (196 aa)) are large ATPase domain (RuvB-L). Residues leucine 38, arginine 39, glycine 80, lysine 83, threonine 84, threonine 85, 146–148 (EDY), arginine 189, tyrosine 199, and arginine 236 contribute to the ATP site. Threonine 84 contributes to the Mg(2+) binding site. The small ATPAse domain (RuvB-S) stretch occupies residues 200-270 (TPEELQQIVV…IVTIGLDKLR (71 aa)). Residues 273 to 351 (NRGLDETDHK…HLGHAYQRKL (79 aa)) form a head domain (RuvB-H) region. DNA is bound by residues arginine 328 and arginine 333.

Belongs to the RuvB family. In terms of assembly, homohexamer. Forms an RuvA(8)-RuvB(12)-Holliday junction (HJ) complex. HJ DNA is sandwiched between 2 RuvA tetramers; dsDNA enters through RuvA and exits via RuvB. An RuvB hexamer assembles on each DNA strand where it exits the tetramer. Each RuvB hexamer is contacted by two RuvA subunits (via domain III) on 2 adjacent RuvB subunits; this complex drives branch migration. In the full resolvosome a probable DNA-RuvA(4)-RuvB(12)-RuvC(2) complex forms which resolves the HJ.

The protein localises to the cytoplasm. It carries out the reaction ATP + H2O = ADP + phosphate + H(+). The RuvA-RuvB-RuvC complex processes Holliday junction (HJ) DNA during genetic recombination and DNA repair, while the RuvA-RuvB complex plays an important role in the rescue of blocked DNA replication forks via replication fork reversal (RFR). RuvA specifically binds to HJ cruciform DNA, conferring on it an open structure. The RuvB hexamer acts as an ATP-dependent pump, pulling dsDNA into and through the RuvAB complex. RuvB forms 2 homohexamers on either side of HJ DNA bound by 1 or 2 RuvA tetramers; 4 subunits per hexamer contact DNA at a time. Coordinated motions by a converter formed by DNA-disengaged RuvB subunits stimulates ATP hydrolysis and nucleotide exchange. Immobilization of the converter enables RuvB to convert the ATP-contained energy into a lever motion, pulling 2 nucleotides of DNA out of the RuvA tetramer per ATP hydrolyzed, thus driving DNA branch migration. The RuvB motors rotate together with the DNA substrate, which together with the progressing nucleotide cycle form the mechanistic basis for DNA recombination by continuous HJ branch migration. Branch migration allows RuvC to scan DNA until it finds its consensus sequence, where it cleaves and resolves cruciform DNA. The protein is Holliday junction branch migration complex subunit RuvB of Leuconostoc mesenteroides subsp. mesenteroides (strain ATCC 8293 / DSM 20343 / BCRC 11652 / CCM 1803 / JCM 6124 / NCDO 523 / NBRC 100496 / NCIMB 8023 / NCTC 12954 / NRRL B-1118 / 37Y).